We begin with the raw amino-acid sequence, 122 residues long: Flagellar hook-basal body complex protein FliE (122 aa).

Belongs to the FliE family.

It localises to the bacterial flagellum basal body. The polypeptide is Flagellar hook-basal body complex protein FliE (Marinobacter nauticus (strain ATCC 700491 / DSM 11845 / VT8) (Marinobacter aquaeolei)).